The following is a 180-amino-acid chain: Large ribosomal subunit protein uL5 (180 aa).

Belongs to the universal ribosomal protein uL5 family. Part of the 50S ribosomal subunit; part of the 5S rRNA/L5/L18/L25 subcomplex. Contacts the 5S rRNA and the P site tRNA. Forms a bridge to the 30S subunit in the 70S ribosome.

This is one of the proteins that bind and probably mediate the attachment of the 5S RNA into the large ribosomal subunit, where it forms part of the central protuberance. In the 70S ribosome it contacts protein S13 of the 30S subunit (bridge B1b), connecting the 2 subunits; this bridge is implicated in subunit movement. Contacts the P site tRNA; the 5S rRNA and some of its associated proteins might help stabilize positioning of ribosome-bound tRNAs. The chain is Large ribosomal subunit protein uL5 from Roseiflexus castenholzii (strain DSM 13941 / HLO8).